A 362-amino-acid chain; its full sequence is Phosphoserine aminotransferase (362 aa).

Positions 9 and 42 each coordinate L-glutamate. Residues 76–77 (GR), Trp102, Thr153, Asp174, and Gln197 each bind pyridoxal 5'-phosphate. At Lys198 the chain carries N6-(pyridoxal phosphate)lysine. 239–240 (NT) contributes to the pyridoxal 5'-phosphate binding site.

The protein belongs to the class-V pyridoxal-phosphate-dependent aminotransferase family. SerC subfamily. As to quaternary structure, homodimer. The cofactor is pyridoxal 5'-phosphate.

It is found in the cytoplasm. It catalyses the reaction O-phospho-L-serine + 2-oxoglutarate = 3-phosphooxypyruvate + L-glutamate. The enzyme catalyses 4-(phosphooxy)-L-threonine + 2-oxoglutarate = (R)-3-hydroxy-2-oxo-4-phosphooxybutanoate + L-glutamate. It participates in amino-acid biosynthesis; L-serine biosynthesis; L-serine from 3-phospho-D-glycerate: step 2/3. The protein operates within cofactor biosynthesis; pyridoxine 5'-phosphate biosynthesis; pyridoxine 5'-phosphate from D-erythrose 4-phosphate: step 3/5. In terms of biological role, catalyzes the reversible conversion of 3-phosphohydroxypyruvate to phosphoserine and of 3-hydroxy-2-oxo-4-phosphonooxybutanoate to phosphohydroxythreonine. The polypeptide is Phosphoserine aminotransferase (Salmonella arizonae (strain ATCC BAA-731 / CDC346-86 / RSK2980)).